The sequence spans 95 residues: Integration host factor subunit beta (95 aa).

The segment at 56–76 (RAPRTGRNPKTGSSVDLEGKY) is disordered.

Belongs to the bacterial histone-like protein family. As to quaternary structure, heterodimer of an alpha and a beta chain.

In terms of biological role, this protein is one of the two subunits of integration host factor, a specific DNA-binding protein that functions in genetic recombination as well as in transcriptional and translational control. This is Integration host factor subunit beta from Shewanella baltica (strain OS223).